Consider the following 412-residue polypeptide: Protein ALF (412 aa).

Disordered stretches follow at residues Met1–Pro47 and Gly154–Glu234. Residues Pro31–Pro47 show a composition bias toward pro residues. Basic residues predominate over residues Met187–Val196. A compositionally biased stretch (acidic residues) spans Met206–Asp221. 3 DNA-binding regions span residues Arg237–Phe241, Asn306–Tyr313, and Tyr377–Thr380.

The protein belongs to the FLO/LFY family. As to expression, expressed in the floral meristem and also in the vegetative meristem.

The protein localises to the nucleus. Its function is as follows. Probable transcription factor required for the specification of floral meristem identity. This is Protein ALF (ALF) from Petunia hybrida (Petunia).